Reading from the N-terminus, the 437-residue chain is Glutamyl-tRNA reductase (437 aa).

Residues Thr-49–Arg-52, Ser-109, Glu-114–Gln-116, and Gln-120 each bind substrate. The active-site Nucleophile is the Cys-50. Gly-198–Ser-203 is an NADP(+) binding site.

The protein belongs to the glutamyl-tRNA reductase family. In terms of assembly, homodimer.

It catalyses the reaction (S)-4-amino-5-oxopentanoate + tRNA(Glu) + NADP(+) = L-glutamyl-tRNA(Glu) + NADPH + H(+). The protein operates within porphyrin-containing compound metabolism; protoporphyrin-IX biosynthesis; 5-aminolevulinate from L-glutamyl-tRNA(Glu): step 1/2. It participates in porphyrin-containing compound metabolism; chlorophyll biosynthesis. In terms of biological role, catalyzes the NADPH-dependent reduction of glutamyl-tRNA(Glu) to glutamate 1-semialdehyde (GSA). This Synechococcus sp. (strain CC9311) protein is Glutamyl-tRNA reductase.